We begin with the raw amino-acid sequence, 316 residues long: Holliday junction branch migration complex subunit RuvB (316 aa).

Residues 1–165 (MQITRPHNFE…FGYIARFVSY (165 aa)) form a large ATPase domain (RuvB-L) region. ATP is bound by residues arginine 5, glycine 46, lysine 49, threonine 50, serine 51, 112 to 114 (EDF), arginine 155, tyrosine 165, and arginine 202. Threonine 50 lines the Mg(2+) pocket. The small ATPAse domain (RuvB-S) stretch occupies residues 166 to 236 (NAEDMKQIIR…IIKKTFKSLD (71 aa)). Residues 239–316 (EYGLTKDHVE…TYLLKEKLIW (78 aa)) are head domain (RuvB-H). DNA contacts are provided by lysine 294 and arginine 299.

Belongs to the RuvB family. Homohexamer. Forms an RuvA(8)-RuvB(12)-Holliday junction (HJ) complex. HJ DNA is sandwiched between 2 RuvA tetramers; dsDNA enters through RuvA and exits via RuvB. An RuvB hexamer assembles on each DNA strand where it exits the tetramer. Each RuvB hexamer is contacted by two RuvA subunits (via domain III) on 2 adjacent RuvB subunits; this complex drives branch migration. In the full resolvosome a probable DNA-RuvA(4)-RuvB(12)-RuvC(2) complex forms which resolves the HJ.

The protein localises to the cytoplasm. It carries out the reaction ATP + H2O = ADP + phosphate + H(+). Functionally, the RuvA-RuvB-RuvC complex processes Holliday junction (HJ) DNA during genetic recombination and DNA repair, while the RuvA-RuvB complex plays an important role in the rescue of blocked DNA replication forks via replication fork reversal (RFR). RuvA specifically binds to HJ cruciform DNA, conferring on it an open structure. The RuvB hexamer acts as an ATP-dependent pump, pulling dsDNA into and through the RuvAB complex. RuvB forms 2 homohexamers on either side of HJ DNA bound by 1 or 2 RuvA tetramers; 4 subunits per hexamer contact DNA at a time. Coordinated motions by a converter formed by DNA-disengaged RuvB subunits stimulates ATP hydrolysis and nucleotide exchange. Immobilization of the converter enables RuvB to convert the ATP-contained energy into a lever motion, pulling 2 nucleotides of DNA out of the RuvA tetramer per ATP hydrolyzed, thus driving DNA branch migration. The RuvB motors rotate together with the DNA substrate, which together with the progressing nucleotide cycle form the mechanistic basis for DNA recombination by continuous HJ branch migration. Branch migration allows RuvC to scan DNA until it finds its consensus sequence, where it cleaves and resolves cruciform DNA. This Mycoplasmopsis synoviae (strain 53) (Mycoplasma synoviae) protein is Holliday junction branch migration complex subunit RuvB.